The sequence spans 1849 residues: Protein virilizer (1849 aa).

Basic and acidic residues-rich tracts occupy residues 206 to 219 (QHYH…QREM), 242 to 265 (THSE…DWSR), 281 to 291 (RSRSDADEHKW), 332 to 347 (HSSE…EERS), and 785 to 818 (VEAK…AAEE). 6 disordered regions span residues 206-364 (QHYH…DEII), 783-818 (RVVE…AAEE), 1557-1584 (SASM…SSSG), 1666-1686 (GESK…EMTP), 1715-1782 (RGRG…NRGS), and 1798-1849 (IGSP…PYLR). The segment covering 1671–1684 (TLNLSGSPQSNREM) has biased composition (polar residues). Low complexity predominate over residues 1732-1742 (SRPPNTSRPPS). Positions 1800–1818 (SPSSWTESGGGSYRSTSES) are enriched in polar residues.

The protein belongs to the vir family. In terms of assembly, component of the WMM complex, a N6-methyltransferase complex composed of a catalytic subcomplex, named MAC, and of an associated subcomplex, named MACOM. The MAC subcomplex is composed of Ime4/Mettl3 and Mettl14. The MACOM subcomplex is composed of fl(2)d, Flacc/Xio, Hakai, vir, and, in some cases of nito. Part of a complex containing fl(2)d, Sxl and vir.

The protein resides in the nucleus. In terms of biological role, associated component of the WMM complex, a complex that mediates N6-methyladenosine (m6A) methylation of mRNAs, a modification that plays a role in the efficiency of mRNA splicing and is required for sex determination. Required for sex determination and dosage compensation via Sxl alternative splicing: m6A methylation acts as a key regulator of Sxl pre-mRNA and promotes female-specific alternative splicing of Sxl, which determines female physiognomy. M6A methylation is also required for neuronal functions. Required for proper inclusion of regulated exons in Ubx transcripts, leading to isoforms Ia/b and IIa/b. This Drosophila pseudoobscura pseudoobscura (Fruit fly) protein is Protein virilizer (vir).